A 119-amino-acid polypeptide reads, in one-letter code: MNKLKRLSMLTVMIASVFIFSSHALAAQYYTVSTSSGAPVNMRSGPGTSWGIVTTIPSGTRIPIYCYKTGTTVTGKYGTSNIWNYTERTLASGEIVPGFVSDTYMYTGSDGPVVPKCSW.

A signal peptide spans 1-26 (MNKLKRLSMLTVMIASVFIFSSHALA). An SH3b domain is found at 30-104 (YTVSTSSGAP…IVPGFVSDTY (75 aa)).

This sequence to B.subtilis YraJ.

This is an uncharacterized protein from Bacillus subtilis (strain 168).